Reading from the N-terminus, the 169-residue chain is Peptide deformylase 1 (169 aa).

Fe cation contacts are provided by cysteine 93 and histidine 135. Residue glutamate 136 is part of the active site. Histidine 139 serves as a coordination point for Fe cation.

This sequence belongs to the polypeptide deformylase family. Requires Fe(2+) as cofactor.

The catalysed reaction is N-terminal N-formyl-L-methionyl-[peptide] + H2O = N-terminal L-methionyl-[peptide] + formate. In terms of biological role, removes the formyl group from the N-terminal Met of newly synthesized proteins. Requires at least a dipeptide for an efficient rate of reaction. N-terminal L-methionine is a prerequisite for activity but the enzyme has broad specificity at other positions. The polypeptide is Peptide deformylase 1 (Corynebacterium efficiens (strain DSM 44549 / YS-314 / AJ 12310 / JCM 11189 / NBRC 100395)).